Here is a 250-residue protein sequence, read N- to C-terminus: Low affinity immunoglobulin gamma Fc region receptor III-A (250 aa).

Residues 1 to 20 (MWRLLSPTALLLLVSAGTRA) form the signal peptide. Residues 21-207 (ADLSKAMVVL…TSTFLPHWYQ (187 aa)) lie on the Extracellular side of the membrane. Ig-like C2-type domains lie at 32-105 (PEWN…LEVH) and 120-189 (EGDT…VNIT). 2 disulfide bridges follow: cysteine 47–cysteine 89 and cysteine 128–cysteine 172. Asparagine 63, asparagine 133, asparagine 180, and asparagine 187 each carry an N-linked (GlcNAc...) asparagine glycan. The chain crosses the membrane as a helical span at residues 208–228 (IAFFLVTALLFVVDTGLHVAV). The Cytoplasmic portion of the chain corresponds to 229-250 (QRDLQSSVKEWKDGKVTWSHGP).

Forms a heterooligomeric complex with ITAM-containing signaling subunits FCER1G. Interacts (via transmembrane domain) with signaling subunits; this interaction is a prerequisite for receptor complex expression on the cell surface and intracellular signal transduction. Binds the Fc region of antigen-complexed IgG.

It is found in the cell membrane. Its function is as follows. Receptor for the invariable Fc fragment of immunoglobulin gamma (IgG). Optimally activated upon binding of clustered antigen-IgG complexes displayed on cell surfaces, triggers lysis of antibody-coated cells, a process known as antibody-dependent cellular cytotoxicity (ADCC). Does not bind free monomeric IgG, thus avoiding inappropriate effector cell activation in the absence of antigenic trigger. Mediates IgG effector functions on natural killer (NK) cells. Binds antigen-IgG complexes generated upon infection and triggers NK cell-dependent cytokine production and degranulation to limit viral load and propagation. Fc-binding subunit that associates with FCER1G adapter to form functional signaling complexes. Following the engagement of antigen-IgG complexes, triggers phosphorylation of immunoreceptor tyrosine-based activation motif (ITAM)-containing adapter with subsequent activation of phosphatidylinositol 3-kinase signaling and sustained elevation of intracellular calcium that ultimately drive NK cell activation. Mediates enhanced ADCC in response to afucosylated IgGs. The chain is Low affinity immunoglobulin gamma Fc region receptor III-A from Felis catus (Cat).